The chain runs to 348 residues: Major outer membrane protein P.IB (348 aa).

The signal sequence occupies residues 1–19 (MKKSLIALTLAALPVAAMA).

The protein belongs to the Gram-negative porin family. As to quaternary structure, homotrimer.

It localises to the cell outer membrane. Its function is as follows. Serves as a slightly cation selective porin. Major antigen on the gonococcal cell surface and it may have pathogenic properties in addition to its porin activity. This Neisseria gonorrhoeae protein is Major outer membrane protein P.IB (porB).